Here is a 252-residue protein sequence, read N- to C-terminus: tRNA (guanine-N(1)-)-methyltransferase (252 aa).

S-adenosyl-L-methionine contacts are provided by residues Gly-116 and 135-140 (LGDYVL).

This sequence belongs to the RNA methyltransferase TrmD family. As to quaternary structure, homodimer.

It localises to the cytoplasm. It catalyses the reaction guanosine(37) in tRNA + S-adenosyl-L-methionine = N(1)-methylguanosine(37) in tRNA + S-adenosyl-L-homocysteine + H(+). In terms of biological role, specifically methylates guanosine-37 in various tRNAs. This Limosilactobacillus reuteri (strain DSM 20016) (Lactobacillus reuteri) protein is tRNA (guanine-N(1)-)-methyltransferase.